Consider the following 344-residue polypeptide: Putative cyclin-Y-like protein 3 (344 aa).

A Cyclin N-terminal domain is found at 40-170 (ERYANRSLAI…FLELLEFNIH (131 aa)).

It belongs to the cyclin family. Cyclin Y subfamily.

This Homo sapiens (Human) protein is Putative cyclin-Y-like protein 3 (CCNYL3).